Reading from the N-terminus, the 277-residue chain is Caspase-3 (277 aa).

Met1 is modified (N-acetylmethionine). 2 propeptides span residues 1–9 (MENNKTSVD) and 10–28 (SKSINNFEVKTIHGSKSVD). Lys11 is modified (N6-acetyllysine). Residue Ser26 is modified to Phosphoserine. Catalysis depends on residues His121 and Cys163. Cys163 carries the S-nitrosocysteine; in inhibited form modification.

The protein belongs to the peptidase C14A family. Heterotetramer that consists of two anti-parallel arranged heterodimers, each one formed by a 17 kDa (p17) and a 12 kDa (p12) subunit. Interacts with BIRC6/bruce. Post-translationally, cleavage by granzyme B, caspase-6, caspase-8 and caspase-10 generates the two active subunits. Additional processing of the propeptides is likely due to the autocatalytic activity of the activated protease. Active heterodimers between the small subunit of caspase-7 protease and the large subunit of caspase-3 also occur and vice versa. In terms of processing, S-nitrosylated on its catalytic site cysteine in unstimulated cell lines and denitrosylated upon activation of the Fas apoptotic pathway, associated with an increase in intracellular caspase activity. Fas therefore activates caspase-3 not only by inducing the cleavage of the caspase zymogen to its active subunits, but also by stimulating the denitrosylation of its active site thiol. Ubiquitinated by BIRC6; this activity is inhibited by DIABLO/SMAC. Highest expression in spleen, lung, liver, kidney and heart. Lower expression in brain, skeletal muscle and testis.

The protein localises to the cytoplasm. The enzyme catalyses Strict requirement for an Asp residue at positions P1 and P4. It has a preferred cleavage sequence of Asp-Xaa-Xaa-Asp-|- with a hydrophobic amino-acid residue at P2 and a hydrophilic amino-acid residue at P3, although Val or Ala are also accepted at this position.. Inhibited by BIRC6; following inhibition of BIRC6-caspase binding by DIABLO/SMAC, BIRC6 is subjected to caspase cleavage, leading to an increase in active caspases. Thiol protease that acts as a major effector caspase involved in the execution phase of apoptosis. Following cleavage and activation by initiator caspases (CASP8, CASP9 and/or CASP10), mediates execution of apoptosis by catalyzing cleavage of many proteins. At the onset of apoptosis, it proteolytically cleaves poly(ADP-ribose) polymerase PARP1 at a '216-Asp-|-Gly-217' bond. Cleaves and activates sterol regulatory element binding proteins (SREBPs) between the basic helix-loop-helix leucine zipper domain and the membrane attachment domain. Cleaves and activates caspase-6, -7 and -9 (CASP6, CASP7 and CASP9, respectively). Cleaves and inactivates interleukin-18 (IL18). Triggers cell adhesion in sympathetic neurons through RET cleavage. Cleaves IL-1 beta between an Asp and an Ala, releasing the mature cytokine which is involved in a variety of inflammatory processes. Cleaves and inhibits serine/threonine-protein kinase AKT1 in response to oxidative stress. Acts as an inhibitor of type I interferon production during virus-induced apoptosis by mediating cleavage of antiviral proteins CGAS, IRF3 and MAVS, thereby preventing cytokine overproduction. Also involved in pyroptosis by mediating cleavage and activation of gasdermin-E (GSDME). Cleaves XRCC4 and phospholipid scramblase proteins XKR4, XKR8 and XKR9, leading to promote phosphatidylserine exposure on apoptotic cell surface. Cleaves BIRC6 following inhibition of BIRC6-caspase binding by DIABLO/SMAC. The sequence is that of Caspase-3 (Casp3) from Mus musculus (Mouse).